We begin with the raw amino-acid sequence, 278 residues long: Dermonecrotic toxin LhSicTox-alphaIV1iii (278 aa).

His5 is an active-site residue. Mg(2+) contacts are provided by Glu25 and Asp27. The Nucleophile role is filled by His41. 2 cysteine pairs are disulfide-bonded: Cys45–Cys51 and Cys47–Cys192. Residue Asp85 participates in Mg(2+) binding.

Belongs to the arthropod phospholipase D family. Class II subfamily. Requires Mg(2+) as cofactor. In terms of tissue distribution, expressed by the venom gland.

The protein localises to the secreted. It carries out the reaction an N-(acyl)-sphingosylphosphocholine = an N-(acyl)-sphingosyl-1,3-cyclic phosphate + choline. The catalysed reaction is an N-(acyl)-sphingosylphosphoethanolamine = an N-(acyl)-sphingosyl-1,3-cyclic phosphate + ethanolamine. It catalyses the reaction a 1-acyl-sn-glycero-3-phosphocholine = a 1-acyl-sn-glycero-2,3-cyclic phosphate + choline. The enzyme catalyses a 1-acyl-sn-glycero-3-phosphoethanolamine = a 1-acyl-sn-glycero-2,3-cyclic phosphate + ethanolamine. In terms of biological role, dermonecrotic toxins cleave the phosphodiester linkage between the phosphate and headgroup of certain phospholipids (sphingolipid and lysolipid substrates), forming an alcohol (often choline) and a cyclic phosphate. This toxin acts on sphingomyelin (SM). It may also act on ceramide phosphoethanolamine (CPE), lysophosphatidylcholine (LPC) and lysophosphatidylethanolamine (LPE), but not on lysophosphatidylserine (LPS), and lysophosphatidylglycerol (LPG). It acts by transphosphatidylation, releasing exclusively cyclic phosphate products as second products. Induces dermonecrosis, hemolysis, increased vascular permeability, edema, inflammatory response, and platelet aggregation. This Loxosceles hirsuta (Recluse spider) protein is Dermonecrotic toxin LhSicTox-alphaIV1iii.